Consider the following 424-residue polypeptide: GTPase Obg (424 aa).

The Obg domain occupies 1-158 (MFVDRARIYI…LWVILELKLL (158 aa)). The 172-residue stretch at 159 to 330 (ADVGLIGFPN…LIYYAAQKLK (172 aa)) folds into the OBG-type G domain. Residues 165-172 (GFPNVGKS), 190-194 (FTTIN), 212-215 (DIPG), 282-285 (NKMD), and 311-313 (SAA) contribute to the GTP site. Positions 172 and 192 each coordinate Mg(2+). Residues 347 to 424 (YTAVEEEPFN…MYDLEFEYFR (78 aa)) form the OCT domain.

The protein belongs to the TRAFAC class OBG-HflX-like GTPase superfamily. OBG GTPase family. Monomer. The cofactor is Mg(2+).

It is found in the cytoplasm. Functionally, an essential GTPase which binds GTP, GDP and possibly (p)ppGpp with moderate affinity, with high nucleotide exchange rates and a fairly low GTP hydrolysis rate. Plays a role in control of the cell cycle, stress response, ribosome biogenesis and in those bacteria that undergo differentiation, in morphogenesis control. This is GTPase Obg from Acetivibrio thermocellus (strain ATCC 27405 / DSM 1237 / JCM 9322 / NBRC 103400 / NCIMB 10682 / NRRL B-4536 / VPI 7372) (Clostridium thermocellum).